The following is a 149-amino-acid chain: D-aminoacyl-tRNA deacylase (149 aa).

Positions 137–138 (GP) match the Gly-cisPro motif, important for rejection of L-amino acids motif.

Belongs to the DTD family. In terms of assembly, homodimer.

It is found in the cytoplasm. It catalyses the reaction glycyl-tRNA(Ala) + H2O = tRNA(Ala) + glycine + H(+). The enzyme catalyses a D-aminoacyl-tRNA + H2O = a tRNA + a D-alpha-amino acid + H(+). In terms of biological role, an aminoacyl-tRNA editing enzyme that deacylates mischarged D-aminoacyl-tRNAs. Also deacylates mischarged glycyl-tRNA(Ala), protecting cells against glycine mischarging by AlaRS. Acts via tRNA-based rather than protein-based catalysis; rejects L-amino acids rather than detecting D-amino acids in the active site. By recycling D-aminoacyl-tRNA to D-amino acids and free tRNA molecules, this enzyme counteracts the toxicity associated with the formation of D-aminoacyl-tRNA entities in vivo and helps enforce protein L-homochirality. This chain is D-aminoacyl-tRNA deacylase, found in Desulforamulus reducens (strain ATCC BAA-1160 / DSM 100696 / MI-1) (Desulfotomaculum reducens).